We begin with the raw amino-acid sequence, 150 residues long: D-aminoacyl-tRNA deacylase (150 aa).

The Gly-cisPro motif, important for rejection of L-amino acids motif lies at Gly-138–Pro-139.

Belongs to the DTD family. In terms of assembly, homodimer.

The protein localises to the cytoplasm. The catalysed reaction is glycyl-tRNA(Ala) + H2O = tRNA(Ala) + glycine + H(+). The enzyme catalyses a D-aminoacyl-tRNA + H2O = a tRNA + a D-alpha-amino acid + H(+). Its function is as follows. An aminoacyl-tRNA editing enzyme that deacylates mischarged D-aminoacyl-tRNAs. Also deacylates mischarged glycyl-tRNA(Ala), protecting cells against glycine mischarging by AlaRS. Acts via tRNA-based rather than protein-based catalysis; rejects L-amino acids rather than detecting D-amino acids in the active site. By recycling D-aminoacyl-tRNA to D-amino acids and free tRNA molecules, this enzyme counteracts the toxicity associated with the formation of D-aminoacyl-tRNA entities in vivo and helps enforce protein L-homochirality. The protein is D-aminoacyl-tRNA deacylase of Salinibacter ruber (strain DSM 13855 / M31).